The chain runs to 106 residues: ATP-dependent Clp protease adapter protein ClpS (106 aa).

Belongs to the ClpS family. In terms of assembly, binds to the N-terminal domain of the chaperone ClpA.

Involved in the modulation of the specificity of the ClpAP-mediated ATP-dependent protein degradation. In Yersinia enterocolitica serotype O:8 / biotype 1B (strain NCTC 13174 / 8081), this protein is ATP-dependent Clp protease adapter protein ClpS.